Consider the following 202-residue polypeptide: LexA repressor (202 aa).

The segment at residues 28–48 (RAEIAQELGFKSPNAAEEHLK) is a DNA-binding region (H-T-H motif). Catalysis depends on for autocatalytic cleavage activity residues Ser-123 and Lys-160.

This sequence belongs to the peptidase S24 family. As to quaternary structure, homodimer.

It catalyses the reaction Hydrolysis of Ala-|-Gly bond in repressor LexA.. In terms of biological role, represses a number of genes involved in the response to DNA damage (SOS response), including recA and lexA. In the presence of single-stranded DNA, RecA interacts with LexA causing an autocatalytic cleavage which disrupts the DNA-binding part of LexA, leading to derepression of the SOS regulon and eventually DNA repair. The sequence is that of LexA repressor from Pseudomonas putida (Arthrobacter siderocapsulatus).